Here is a 491-residue protein sequence, read N- to C-terminus: Probable cysteine proteinase 024R (491 aa).

Active-site residues include Cys-132, His-325, and Asn-355. The helical transmembrane segment at 467–487 (ALDLALLVLPALLIVIVVLIG) threads the bilayer.

The protein belongs to the peptidase C1 family.

The protein localises to the membrane. Functionally, probable cysteine protease. In Invertebrate iridescent virus 3 (IIV-3), this protein is Probable cysteine proteinase 024R.